Reading from the N-terminus, the 403-residue chain is Endophilin-B2 (403 aa).

The tract at residues 1–27 (MDFNVKKLASDAGVFFSRAMQFTEEKL) is membrane-binding amphipathic helix. In terms of domain architecture, BAR spans 24–287 (EEKLGQAEKT…LGRFSGTFVG (264 aa)). Residues 210-233 (WSDEVEKAEHELRLTQTEFDRQAE) are a coiled coil. Residues 343–403 (SGTRKARVLY…VPVTYLELLS (61 aa)) enclose the SH3 domain.

The protein belongs to the endophilin family. Homodimer, and heterodimer with SH3GLB1.

The protein localises to the cytoplasm. In Gallus gallus (Chicken), this protein is Endophilin-B2.